Reading from the N-terminus, the 249-residue chain is 5'-nucleotidase SurE (249 aa).

Residues aspartate 8, aspartate 9, serine 39, and asparagine 91 each contribute to the a divalent metal cation site.

It belongs to the SurE nucleotidase family. The cofactor is a divalent metal cation.

The protein localises to the cytoplasm. It catalyses the reaction a ribonucleoside 5'-phosphate + H2O = a ribonucleoside + phosphate. In terms of biological role, nucleotidase that shows phosphatase activity on nucleoside 5'-monophosphates. In Pseudomonas aeruginosa (strain LESB58), this protein is 5'-nucleotidase SurE.